Reading from the N-terminus, the 353-residue chain is MTAIRPGSVTFENVTKKFGNFTALPNLSLTVEPGTLVTLLGPSGCGKTTTLRLLAGLEHPTSGRILVGGKDVTNLPANERDVSMVFQSYALFPHMTSLENVAYGLESSGFKKNEARERAEEGLKLVGLGGMGHRLPAELSGGQQQRVAVARALVLEPQVLLLDEPLSNLDARLRRRVRTEIRELQQRLGFTADYVTHDQDEALAVSDTIIVMKEGGIAQKGSPRDLYEAPASAFIADFMGEANVVPCEVISAENGEAVIRVAGLTHRVPARNAQPRPAQLAIRPNAVTLQPQAGGGFSGTVAHSAYLGDHIEYEIETEHGKLFIVDPAVEQSLPLQTDVSIQFKTRGLAIINQ.

The ABC transporter domain occupies 9-239 (VTFENVTKKF…PASAFIADFM (231 aa)). 41-48 (GPSGCGKT) serves as a coordination point for ATP.

It belongs to the ABC transporter superfamily. Fe(3+) ion importer (TC 3.A.1.10) family. As to quaternary structure, the complex is composed of two ATP-binding proteins (FbpC), two transmembrane proteins (FbpB) and a solute-binding protein (FbpA).

The protein localises to the cell inner membrane. The enzyme catalyses Fe(3+)(out) + ATP + H2O = Fe(3+)(in) + ADP + phosphate + H(+). Functionally, part of the ABC transporter complex FbpABC involved in Fe(3+) ions import. Responsible for energy coupling to the transport system. This is Fe(3+) ions import ATP-binding protein FbpC from Brucella suis biovar 1 (strain 1330).